The following is a 701-amino-acid chain: Elongation factor G (701 aa).

The tr-type G domain maps to 8–290; sequence SLYRNIGISA…AVVELLPAPT (283 aa). Residues 17 to 24, 88 to 92, and 142 to 145 each bind GTP; these read AHIDAGKT, DTPGH, and NKMD.

This sequence belongs to the TRAFAC class translation factor GTPase superfamily. Classic translation factor GTPase family. EF-G/EF-2 subfamily.

It localises to the cytoplasm. In terms of biological role, catalyzes the GTP-dependent ribosomal translocation step during translation elongation. During this step, the ribosome changes from the pre-translocational (PRE) to the post-translocational (POST) state as the newly formed A-site-bound peptidyl-tRNA and P-site-bound deacylated tRNA move to the P and E sites, respectively. Catalyzes the coordinated movement of the two tRNA molecules, the mRNA and conformational changes in the ribosome. The sequence is that of Elongation factor G from Neisseria gonorrhoeae (strain ATCC 700825 / FA 1090).